We begin with the raw amino-acid sequence, 78 residues long: Large ribosomal subunit protein eL20 (78 aa).

The protein belongs to the eukaryotic ribosomal protein eL20 family. In terms of assembly, part of the 50S ribosomal subunit. Binds 23S rRNA.

The protein is Large ribosomal subunit protein eL20 of Methanothermobacter thermautotrophicus (strain ATCC 29096 / DSM 1053 / JCM 10044 / NBRC 100330 / Delta H) (Methanobacterium thermoautotrophicum).